The following is a 297-amino-acid chain: MNNQMDIGNPTRTRAILEKYGLSAKKSLGQNFLTDPNVLLNIVDAAEVSPEDDVIEVGPGIGSLTEQIAKRAHHVLAFEIDRNLMNVLDETLSPYDNITVVNQDVLKANVNEEVENHLDGKRRLKLVANLPYYITTPILKTFMASTLPIDKMVVMMQKEVAERLTAQPGDKEYGSLSVVVQYRMNTQIEFDVSSKVFVPRPKVDSAIVSLTPRAGWEVMPEDDKDFFKTVHGCFMHRRKNIWNNMQGLYGKEPEIKAKIQNVLDDLGIDPQVRPERLTVLDFIKLHNRIQIEGLKRK.

S-adenosyl-L-methionine contacts are provided by Asn31, Leu33, Gly58, Glu79, Asp104, and Asn129.

The protein belongs to the class I-like SAM-binding methyltransferase superfamily. rRNA adenine N(6)-methyltransferase family. RsmA subfamily.

It localises to the cytoplasm. It carries out the reaction adenosine(1518)/adenosine(1519) in 16S rRNA + 4 S-adenosyl-L-methionine = N(6)-dimethyladenosine(1518)/N(6)-dimethyladenosine(1519) in 16S rRNA + 4 S-adenosyl-L-homocysteine + 4 H(+). In terms of biological role, specifically dimethylates two adjacent adenosines (A1518 and A1519) in the loop of a conserved hairpin near the 3'-end of 16S rRNA in the 30S particle. May play a critical role in biogenesis of 30S subunits. This chain is Ribosomal RNA small subunit methyltransferase A, found in Pediococcus pentosaceus (strain ATCC 25745 / CCUG 21536 / LMG 10740 / 183-1w).